A 255-amino-acid polypeptide reads, in one-letter code: Putative OPA3-like protein CG13603 (255 aa).

Residues 108 to 154 (KENKKNELAQSEKMELTNMLTEMNFRLERQDAQIREMTRVLADLDSR) adopt a coiled-coil conformation. The interval 168–187 (VPFDPDTPDQSASARNPKKF) is disordered. Residues 212-241 (DGRNRKAKEALQHLDEVAVQLEQSLGEAAT) are a coiled coil.

The protein belongs to the OPA3 family.

The chain is Putative OPA3-like protein CG13603 from Drosophila melanogaster (Fruit fly).